The chain runs to 365 residues: Aminomethyltransferase (365 aa).

It belongs to the GcvT family. The glycine cleavage system is composed of four proteins: P, T, L and H.

It carries out the reaction N(6)-[(R)-S(8)-aminomethyldihydrolipoyl]-L-lysyl-[protein] + (6S)-5,6,7,8-tetrahydrofolate = N(6)-[(R)-dihydrolipoyl]-L-lysyl-[protein] + (6R)-5,10-methylene-5,6,7,8-tetrahydrofolate + NH4(+). Functionally, the glycine cleavage system catalyzes the degradation of glycine. This chain is Aminomethyltransferase, found in Desulfitobacterium hafniense (strain Y51).